The chain runs to 322 residues: MTVTKIEIPTIDLRGYYEPTSPTSKEEVVAQVRAACLEHGFFQIEGHGVSLEVQRNMLAACKTFFDLPTDQKAELSLYKNTWRRGYEGYGEQTPHHAVLPDQKEAFFVGRDLPEDQIGFLKGPNVWPEQVPTNQFRGPVEEYFEALLKLGHRVMEVLVVGMGHPPSILDSFTGNAAMFLKLLRYPEHTFTDPRVFGSGAHTDYGGLTILLQDPGKHGLEVYHAATEQWIPVPAVEDRFVINLGDMVQRWTDGEYKSNLHRVLNKASGERFAVPAFWHGDLEATNPLNPNDTSGETVQDFIRKKFYRDYSLPLAEEKGTAVAV.

In terms of domain architecture, Fe2OG dioxygenase spans Thr-172–Asp-279. Residues His-200, Asp-202, and His-259 each contribute to the Fe cation site. 2-oxoglutarate is bound at residue Arg-269.

The protein belongs to the iron/ascorbate-dependent oxidoreductase family. The cofactor is Fe(2+).

It functions in the pathway secondary metabolite biosynthesis. Its function is as follows. 2-oxoglutarate-dependent dioxygenase; part of the gene cluster that produces the acyltetronic acid derivatives carlosic acid, agglomerin F and carlosic acid methyl ether. CaaD catalyzes the sequential oxidations of the terminal C-10 methyl group of the caaC product to form carboxylic acid which is necessary for the biosynthesis of agglomerin F. This is 2-oxoglutarate-dependent dioxygenase caaD from Aspergillus niger (strain ATCC MYA-4892 / CBS 513.88 / FGSC A1513).